The primary structure comprises 386 residues: Acetylornithine aminotransferase (386 aa).

Pyridoxal 5'-phosphate contacts are provided by residues 96–97 (GA) and Phe-123. Arg-126 contributes to the N(2)-acetyl-L-ornithine binding site. Position 208–211 (208–211 (DEVQ)) interacts with pyridoxal 5'-phosphate. An N6-(pyridoxal phosphate)lysine modification is found at Lys-237. Ser-265 contacts N(2)-acetyl-L-ornithine. Residue Thr-266 coordinates pyridoxal 5'-phosphate.

The protein belongs to the class-III pyridoxal-phosphate-dependent aminotransferase family. ArgD subfamily. As to quaternary structure, homodimer. The cofactor is pyridoxal 5'-phosphate.

The protein localises to the cytoplasm. It carries out the reaction N(2)-acetyl-L-ornithine + 2-oxoglutarate = N-acetyl-L-glutamate 5-semialdehyde + L-glutamate. Its pathway is amino-acid biosynthesis; L-arginine biosynthesis; N(2)-acetyl-L-ornithine from L-glutamate: step 4/4. This is Acetylornithine aminotransferase from Bacillus cereus (strain ATCC 14579 / DSM 31 / CCUG 7414 / JCM 2152 / NBRC 15305 / NCIMB 9373 / NCTC 2599 / NRRL B-3711).